Here is a 208-residue protein sequence, read N- to C-terminus: Component of Sp100-rs (208 aa).

Residues 6 to 121 form the HSR domain; it reads GSPRMSTEQE…LRRSFECGAK (116 aa).

In Mus musculus (Mouse), this protein is Component of Sp100-rs (Csprs).